A 388-amino-acid chain; its full sequence is MTISETWLLPDGVADVLPEQAQVIEKLRREAIDFLAVRGYQLVYTPFIEYIESLSSLSESNQDLDLVTFKVIDQLSGRLLGIRADMTPQVARIDAHVRPVEGVARYCYAGTVLHTKPQNFNATRAPLQLGAELYGHDSIEADVEMVDVMLGLIENAYTLQGAHLDLGHVGLFRSLVKYAGLSKNEEHELSDLYQRKALPELAEFTQNLNMGSDFYALGRYASDLDALQAHLSADILKDAEFDAALNALKTTLEQIKNRWPALNVGIDVVELRSYHYHTGLMYAVYAPNRAAPLAQGGRYDGIGEHFGRARPATGFSCDLYALGANQFAEIETVVAPKGTEADLLKAIANARSEGLRVVQLLGNDDLSSIPYATHQLVLQNGQWNIEKI.

Belongs to the class-II aminoacyl-tRNA synthetase family. HisZ subfamily. In terms of assembly, heteromultimer composed of HisG and HisZ subunits.

Its subcellular location is the cytoplasm. The protein operates within amino-acid biosynthesis; L-histidine biosynthesis; L-histidine from 5-phospho-alpha-D-ribose 1-diphosphate: step 1/9. In terms of biological role, required for the first step of histidine biosynthesis. May allow the feedback regulation of ATP phosphoribosyltransferase activity by histidine. This chain is ATP phosphoribosyltransferase regulatory subunit, found in Acinetobacter baumannii (strain AB307-0294).